The sequence spans 295 residues: Indole-3-glycerol phosphate synthase (295 aa).

This sequence belongs to the TrpC family.

The catalysed reaction is 1-(2-carboxyphenylamino)-1-deoxy-D-ribulose 5-phosphate + H(+) = (1S,2R)-1-C-(indol-3-yl)glycerol 3-phosphate + CO2 + H2O. The protein operates within amino-acid biosynthesis; L-tryptophan biosynthesis; L-tryptophan from chorismate: step 4/5. The chain is Indole-3-glycerol phosphate synthase from Prochlorococcus marinus subsp. pastoris (strain CCMP1986 / NIES-2087 / MED4).